The following is a 533-amino-acid chain: Nuclear receptor corepressor 1 (533 aa).

Positions 1–17 (KDKGPPPKSRYEEELRT) are enriched in basic and acidic residues. The tract at residues 1 to 21 (KDKGPPPKSRYEEELRTRGKT) is disordered. Positions 29-33 (IDVII) match the CORNR box 1 motif. Residues 37-144 (IASDKDARER…EGMGQVPRTH (108 aa)) are disordered. Basic and acidic residues predominate over residues 38–47 (ASDKDARERG). The segment covering 48-59 (SQSSDSSSSLSS) has biased composition (low complexity). Ser73 and Ser77 each carry phosphoserine. The segment at 130–209 (PSSQAEGMGQ…QSQTVLHPRP (80 aa)) is ID1. A required for interaction with RARA in the absence of its ligand region spans residues 145–148 (RLIT). The short motif at 153 to 157 (ICQII) is the CORNR box 2 element. Positions 165–180 (QVPSQPSTSTFQTSPS) are enriched in low complexity. The disordered stretch occupies residues 165-254 (QVPSQPSTST…SPPQGPAVHE (90 aa)). Positions 181 to 204 (ALSSTPVRTKPSSRYSPESQSQTV) are enriched in polar residues. Phosphoserine is present on residues Ser196, Ser214, Ser230, Ser245, and Ser278. Residues 218-236 (LVDKSRGSRPGKSPERSHI) are compositionally biased toward basic and acidic residues. Residues 306-367 (IFRKLNSSGG…EDIIRKALMG (62 aa)) form an ID2 region. The CORNR box 3 motif lies at 357 to 361 (LEDII). A compositionally biased stretch (low complexity) spans 382-399 (HPVGVVPGSASTSVVTSS). The disordered stretch occupies residues 382–476 (HPVGVVPGSA…RPSSTGSTQF (95 aa)). Phosphothreonine is present on Thr492. Phosphoserine is present on residues Ser529 and Ser531.

This sequence belongs to the N-CoR nuclear receptor corepressors family. In terms of assembly, forms a large corepressor complex that contains SIN3A/B and histone deacetylases HDAC1 and HDAC2. This complex associates with the thyroid receptor (TR) and the retinoid acid receptor (RAR) in the absence of ligand. Interacts directly with RARA; the interaction is facilitated with RARA trimethylation. Component of the N-Cor repressor complex, at least composed of CBFA2T3, HEXIM1, NCOR1, NCOR2, HDAC3, TBL1X, TBL1XR1, CORO2A and GPS2. Interacts with ZBTB33; the interaction serves to recruit the N-CoR complex to promoter regions containing methylated CpG dinucleotides. Interacts with TRIM28 and KDM3A. Interacts (via the RD1 domain) with BAZ1A (via its N-terminal); the interaction corepresses a number of NCOR1-regulated genes. Interacts with BCL6, C1D, DACH1, HEXIM1, HDAC7, RORA, RORC, SAP30, SIAH2, SIN3A and SIN3B. May interact with DEAF1. Interacts with RXRA. Interacts with SETD5. Interacts with VDR. Interacts with ZBTB7A. Interacts with AR. Interacts with HDAC3. Post-translationally, ubiquitinated; mediated by SIAH2 and leading to its subsequent proteasomal degradation.

Its subcellular location is the nucleus. Mediates transcriptional repression by certain nuclear receptors. Part of a complex which promotes histone deacetylation and the formation of repressive chromatin structures which may impede the access of basal transcription factors. Participates in the transcriptional repressor activity produced by BCL6. Recruited by ZBTB7A to the androgen response elements/ARE on target genes, negatively regulates androgen receptor signaling and androgen-induced cell proliferation. Mediates the NR1D1-dependent repression and circadian regulation of TSHB expression. The NCOR1-HDAC3 complex regulates the circadian expression of the core clock gene ARTNL/BMAL1 and the genes involved in lipid metabolism in the liver. This chain is Nuclear receptor corepressor 1 (Ncor1), found in Rattus norvegicus (Rat).